Reading from the N-terminus, the 634-residue chain is Carbon monoxide dehydrogenase 2 (634 aa).

5 residues coordinate [4Fe-4S] cluster: C44, C53, C56, C61, and C73. The [Ni-4Fe-5S] cluster site is built by H264, C343, C453, C484, and C525.

This sequence belongs to the Ni-containing carbon monoxide dehydrogenase family. Homodimer. It depends on [4Fe-4S] cluster as a cofactor. Requires [Ni-4Fe-5S] cluster as cofactor.

It carries out the reaction CO + 2 oxidized [2Fe-2S]-[ferredoxin] + H2O = 2 reduced [2Fe-2S]-[ferredoxin] + CO2 + 2 H(+). Its function is as follows. CODH oxidizes carbon monoxide coupled, via CooF, to the reduction of a hydrogen cation by a hydrogenase (possibly CooH). This is Carbon monoxide dehydrogenase 2 (cooS2) from Methanosarcina mazei (strain ATCC BAA-159 / DSM 3647 / Goe1 / Go1 / JCM 11833 / OCM 88) (Methanosarcina frisia).